The sequence spans 301 residues: Beta-1,3-galactosyltransferase 5 (301 aa).

Residues 1–7 are Cytoplasmic-facing; sequence MAFPKMR. A helical; Signal-anchor for type II membrane protein transmembrane segment spans residues 8–28; it reads LMYVCLLVLGALCLYFSMYSL. Over 29-301 the chain is Lumenal; the sequence is NLFKEQSFVY…LLDYWQALEN (273 aa). N-linked (GlcNAc...) asparagine glycans are attached at residues Asn-130, Asn-174, and Asn-231.

The protein belongs to the glycosyltransferase 31 family.

It is found in the golgi apparatus membrane. The enzyme catalyses a globoside Gb4Cer (d18:1(4E)) + UDP-alpha-D-galactose = a globoside GalGb4Cer (d18:1(4E)) + UDP + H(+). Its pathway is protein modification; protein glycosylation. Its function is as follows. Catalyzes the transfer of Gal to GlcNAc-based acceptors with a preference for the core3 O-linked glycan GlcNAc(beta1,3)GalNAc structure. Can use glycolipid LC3Cer as an efficient acceptor. This is Beta-1,3-galactosyltransferase 5 (B3GALT5) from Pan paniscus (Pygmy chimpanzee).